Consider the following 710-residue polypeptide: E3 ubiquitin-protein ligase TRIM9 (710 aa).

The RING-type zinc finger occupies 10–50 (CPVCGSFYREPIILPCSHNLCQACARNILVQTPESESPQSH). Thr41 bears the Phosphothreonine mark. 3 positions are modified to phosphoserine: Ser44, Ser46, and Ser49. B box-type zinc fingers lie at residues 163–212 (AAAL…LVPP) and 224–266 (RKVS…VKAL). 8 residues coordinate Zn(2+): Cys168, Cys171, Cys193, His198, Cys229, His232, Cys252, and His258. Positions 273–340 (HKSQLSQALN…KAQLLARVNK (68 aa)) form a coiled coil. The region spanning 374 to 432 (IKENDPSGFLQISDALIRRVHLTEDQWGKGTLTPRMTTDFDLSLDNSPLLQSIHQLDFV) is the COS domain. One can recognise a Fibronectin type-III domain in the interval 440-535 (VPATPILQLE…KTLVLQTSEV (96 aa)). The B30.2/SPRY domain maps to 533-702 (SEVAWFAFDP…LHTGLPVPDF (170 aa)).

Belongs to the TRIM/RBCC family. Interacts with SNAP25. Post-translationally, auto-ubiquitinated. Poly-ubiquitinated in cultured cells, whereas it is monoubiquitinated in vitro. As to expression, brain. Highly expressed in the cerebral cortex (at protein level). Severely decreased in the affected brain areas in Parkinson disease and dementia with Lewy bodies.

It is found in the cytoplasm. The protein resides in the cell projection. Its subcellular location is the dendrite. It localises to the cytoplasmic vesicle. The protein localises to the secretory vesicle. It is found in the synaptic vesicle. The protein resides in the synapse. Its subcellular location is the cytoskeleton. The enzyme catalyses S-ubiquitinyl-[E2 ubiquitin-conjugating enzyme]-L-cysteine + [acceptor protein]-L-lysine = [E2 ubiquitin-conjugating enzyme]-L-cysteine + N(6)-ubiquitinyl-[acceptor protein]-L-lysine.. It functions in the pathway protein modification; protein ubiquitination. E3 ubiquitin-protein ligase which ubiquitinates itself in cooperation with an E2 enzyme UBE2D2/UBC4 and serves as a targeting signal for proteasomal degradation. May play a role in regulation of neuronal functions and may also participate in the formation or breakdown of abnormal inclusions in neurodegenerative disorders. May act as a regulator of synaptic vesicle exocytosis by controlling the availability of SNAP25 for the SNARE complex formation. The polypeptide is E3 ubiquitin-protein ligase TRIM9 (TRIM9) (Homo sapiens (Human)).